The chain runs to 379 residues: Heme chaperone HemW (379 aa).

The Radical SAM core domain maps to 1-233 (MKSAYIHIPF…MSKMEAHGIH (233 aa)). S-adenosyl-L-methionine is bound at residue Tyr5. 3 residues coordinate [4Fe-4S] cluster: Cys11, Cys15, and Cys18. S-adenosyl-L-methionine contacts are provided by residues Gly60, 61–62 (GT), Glu94, Gln121, Arg133, and Asp158.

It belongs to the anaerobic coproporphyrinogen-III oxidase family. HemW subfamily. It depends on [4Fe-4S] cluster as a cofactor.

It is found in the cytoplasm. Probably acts as a heme chaperone, transferring heme to an unknown acceptor. Binds one molecule of heme per monomer, possibly covalently. Binds 1 [4Fe-4S] cluster. The cluster is coordinated with 3 cysteines and an exchangeable S-adenosyl-L-methionine. This chain is Heme chaperone HemW, found in Bacillus subtilis (strain 168).